Reading from the N-terminus, the 189-residue chain is Lumazine protein (189 aa).

Lumazine-binding repeat units follow at residues 1–96 and 97–189; these read MFKG…LGKG and ALTG…SNEW.

The cofactor is 6,7-dimethyl-8-(1-D-ribityl)lumazine.

Functionally, antenna protein that modulates the color of the bioluminescence emission of the luciferase. In the presence of LumP, luciferase emission is shifted to higher energy values (shorter wavelength). The chain is Lumazine protein (luxL) from Photobacterium phosphoreum.